The following is a 187-amino-acid chain: ATP synthase subunit delta, chloroplastic (187 aa).

Belongs to the ATPase delta chain family. In terms of assembly, F-type ATPases have 2 components, F(1) - the catalytic core - and F(0) - the membrane proton channel. F(1) has five subunits: alpha(3), beta(3), gamma(1), delta(1), epsilon(1). CF(0) has four main subunits: a(1), b(1), b'(1) and c(10-14). The alpha and beta chains form an alternating ring which encloses part of the gamma chain. F(1) is attached to F(0) by a central stalk formed by the gamma and epsilon chains, while a peripheral stalk is formed by the delta, b and b' chains.

It is found in the plastid. Its subcellular location is the chloroplast thylakoid membrane. In terms of biological role, f(1)F(0) ATP synthase produces ATP from ADP in the presence of a proton or sodium gradient. F-type ATPases consist of two structural domains, F(1) containing the extramembraneous catalytic core and F(0) containing the membrane proton channel, linked together by a central stalk and a peripheral stalk. During catalysis, ATP synthesis in the catalytic domain of F(1) is coupled via a rotary mechanism of the central stalk subunits to proton translocation. Its function is as follows. This protein is part of the stalk that links CF(0) to CF(1). It either transmits conformational changes from CF(0) to CF(1) or is implicated in proton conduction. In Thalassiosira pseudonana (Marine diatom), this protein is ATP synthase subunit delta, chloroplastic.